Reading from the N-terminus, the 424-residue chain is Methylthioribose-1-phosphate isomerase (424 aa).

D281 acts as the Proton donor in catalysis.

Belongs to the eIF-2B alpha/beta/delta subunits family. MtnA subfamily.

It localises to the cytoplasm. The protein resides in the nucleus. The catalysed reaction is 5-(methylsulfanyl)-alpha-D-ribose 1-phosphate = 5-(methylsulfanyl)-D-ribulose 1-phosphate. It participates in amino-acid biosynthesis; L-methionine biosynthesis via salvage pathway; L-methionine from S-methyl-5-thio-alpha-D-ribose 1-phosphate: step 1/6. Its function is as follows. Catalyzes the interconversion of methylthioribose-1-phosphate (MTR-1-P) into methylthioribulose-1-phosphate (MTRu-1-P). This chain is Methylthioribose-1-phosphate isomerase, found in Candida dubliniensis (strain CD36 / ATCC MYA-646 / CBS 7987 / NCPF 3949 / NRRL Y-17841) (Yeast).